The sequence spans 132 residues: Small ribosomal subunit protein uS8 (132 aa).

It belongs to the universal ribosomal protein uS8 family. Part of the 30S ribosomal subunit. Contacts proteins S5 and S12.

Functionally, one of the primary rRNA binding proteins, it binds directly to 16S rRNA central domain where it helps coordinate assembly of the platform of the 30S subunit. This chain is Small ribosomal subunit protein uS8, found in Mycobacterium sp. (strain KMS).